The following is a 155-amino-acid chain: Ribonuclease H (155 aa).

The RNase H type-1 domain maps to 1 to 142 (MLKQVEIFTD…CDELARAAAM (142 aa)). Residues D10, E48, D70, and D134 each coordinate Mg(2+).

This sequence belongs to the RNase H family. In terms of assembly, monomer. It depends on Mg(2+) as a cofactor.

It localises to the cytoplasm. It catalyses the reaction Endonucleolytic cleavage to 5'-phosphomonoester.. Endonuclease that specifically degrades the RNA of RNA-DNA hybrids. The sequence is that of Ribonuclease H from Escherichia fergusonii (strain ATCC 35469 / DSM 13698 / CCUG 18766 / IAM 14443 / JCM 21226 / LMG 7866 / NBRC 102419 / NCTC 12128 / CDC 0568-73).